We begin with the raw amino-acid sequence, 384 residues long: MHVTAITMEDANFPYRLGTDCAEELVARLGVRAASRYLVVCDTTVAALYGHDLVARLEKDAGPAVLLTHQVGEVHKDVTTVGALAEQALGAGADRRSVVVALGGGITGNIAGLLAALLFRGITLVHVPTTVVAMLDSVLSLKQAVNASFGKNLVGTFYQPAEVLADTAMLRTLPEREVRSGMGEVVKNALAVRPAMADRLAGLLRPDARYDDDALRWIIAESVAAKADVTGADKHERGDGLVLEYGHTAGHAIEHAARGAVAHGAGVAVGMVIAAEVSHRLGHASASFVARHRELISKAGLEDTVPACVRTDDVKNWLTYDNKRGYLDCAADTTPMVLLAGPGRPLRTGGMPLVPVPLAVLNETVDALAAPGRAGTDHRTAVPV.

Residues Asp42, 73 to 76 (EVHK), 105 to 109 (GITGN), 129 to 130 (TT), 140 to 142 (SLK), and 151 to 152 (KN) contribute to the NAD(+) site. Lys142 is an active-site residue. Glu184 contributes to the Co(2+) binding site. Residue Glu244 is part of the active site. Positions 247 and 263 each coordinate Co(2+).

This sequence belongs to the sugar phosphate cyclases superfamily. DOI synthase family. The cofactor is NAD(+). Requires Co(2+) as cofactor.

The enzyme catalyses D-glucose 6-phosphate = 2-deoxy-L-scyllo-inosose + phosphate. It functions in the pathway metabolic intermediate biosynthesis; 2-deoxystreptamine biosynthesis; 2-deoxystreptamine from D-glucose 6-phosphate: step 1/4. Its pathway is antibiotic biosynthesis; lividomycin biosynthesis. Functionally, catalyzes the intramolecular carbocycle formation from D-glucose-6-phosphate to 2-deoxy-scyllo-inosose (DOI). In Streptomyces lividus, this protein is 2-deoxy-scyllo-inosose synthase (livC).